We begin with the raw amino-acid sequence, 118 residues long: Large ribosomal subunit protein bL20 (118 aa).

The protein belongs to the bacterial ribosomal protein bL20 family.

Functionally, binds directly to 23S ribosomal RNA and is necessary for the in vitro assembly process of the 50S ribosomal subunit. It is not involved in the protein synthesizing functions of that subunit. This chain is Large ribosomal subunit protein bL20, found in Cupriavidus metallidurans (strain ATCC 43123 / DSM 2839 / NBRC 102507 / CH34) (Ralstonia metallidurans).